The primary structure comprises 754 residues: MTILTHTLGFPRVGLRRELKKAQESYWAGNSTREALLAVGRELRARHWEQQKQAGIDLLPVGDFAWYDHVLTTSLLLGNVSARHQNNDGSVDIDTLFRIGRGRAPTGEPAAAAEMTKWFNTNYHYIVPEFSKGQQFRLTWTQLLEEVDEALALGHKIKPVLLGPVTYLWLGKVKGEPFDRLTLLKDILPVYQHVLAELAKRGIEWVQIDEPALVLELPQAWLDAFKPAYDALAGQVKLLLTTYFEGVTPNLDTIIALPVQGLHVDLIHGKDDVAELHQRLPVDWLLSAGLINGRNVWRADLTEKYAQINALVGKRALWVASSCSLLHSPIDLSVETRLDTEVKSWFAFALQKCGELALLRDALNSGETAALEEWSAPIQARRHSRRVHNAAVEKRLAAITAQDSQRENPYEVRAEAQRARFKLPAWPTTTIGSFPQTTEIRGLRLDFKKGNLDANNYHTGIAEHIKQAIIEQERLGLDVLVHGEAERNDMVEYFGEHLDGFVFTQNGWVQSYGSRCVKPPVVIGDISRPAPITVEWAKYAQSLTDKPVKGMLTGPVTILCWSFPREDVTRETIAKQIALALRDEVADLEAAGIGIIQIDEPALREGLPLRRSDWDAYLEWGVEAFRINAAVAKDETQIHTHMCYCEFNDIMDSIAALDADVITIETSRSDMELLESFEAFDYPNEIGPGVYDIHSPNVPSVEWIEALLKKAAQRIPAQRLWVNPDCGLKTRGWPETRAALANMVKAAHNLRQAK.

5-methyltetrahydropteroyltri-L-glutamate-binding positions include 17-20 (RELK) and Lys117. L-homocysteine contacts are provided by residues 431 to 433 (IGS) and Glu484. Residues 431-433 (IGS) and Glu484 each bind L-methionine. Residues 515–516 (RC) and Trp561 each bind 5-methyltetrahydropteroyltri-L-glutamate. An L-homocysteine-binding site is contributed by Asp599. Residue Asp599 coordinates L-methionine. Glu605 provides a ligand contact to 5-methyltetrahydropteroyltri-L-glutamate. The Zn(2+) site is built by His641, Cys643, and Glu665. His694 serves as the catalytic Proton donor. Cys726 serves as a coordination point for Zn(2+).

It belongs to the vitamin-B12 independent methionine synthase family. The cofactor is Zn(2+).

The enzyme catalyses 5-methyltetrahydropteroyltri-L-glutamate + L-homocysteine = tetrahydropteroyltri-L-glutamate + L-methionine. It functions in the pathway amino-acid biosynthesis; L-methionine biosynthesis via de novo pathway; L-methionine from L-homocysteine (MetE route): step 1/1. Functionally, catalyzes the transfer of a methyl group from 5-methyltetrahydrofolate to homocysteine resulting in methionine formation. The protein is 5-methyltetrahydropteroyltriglutamate--homocysteine methyltransferase of Salmonella newport (strain SL254).